The sequence spans 524 residues: Tubulin-specific chaperone E (524 aa).

N-acetylserine is present on Ser-2. Positions 27–71 (GAVPPVAGLWLGVEWDNPERGKHDGSHEGTMYFKCRHPTGGSFVR) constitute a CAP-Gly domain. 7 LRR repeats span residues 154–175 (NIRV…ILIA), 180–201 (DLEA…PTLT), 206–227 (TLKT…HCAP), 231–253 (VLQE…NALQ), 254–273 (NLRL…QLCL), 279–300 (RLEH…DAEI), and 309–330 (ALTY…NELD). One can recognise an LRRCT domain in the interval 343–381 (NPLTKGDKAEEIIIAKIGQLKTLNRCQILPEERRGAELD). Lys-460 carries the N6-acetyllysine modification. Residue Ser-492 is modified to Phosphoserine.

Belongs to the TBCE family. As to quaternary structure, supercomplex made of cofactors A to E. Cofactors A and D function by capturing and stabilizing tubulin in a quasi-native conformation. Cofactor E binds to the cofactor D-tubulin complex; interaction with cofactor C then causes the release of tubulin polypeptides that are committed to the native state. Cofactors B and E can form a heterodimer which binds to alpha-tubulin and enhances their ability to dissociate tubulin heterodimers. Interacts with TBCD.

Its subcellular location is the cytoplasm. The protein resides in the cytoskeleton. In terms of biological role, tubulin-folding protein; involved in the second step of the tubulin folding pathway and in the regulation of tubulin heterodimer dissociation. Required for correct organization of microtubule cytoskeleton and mitotic splindle, and maintenance of the neuronal microtubule network. The polypeptide is Tubulin-specific chaperone E (Tbce) (Rattus norvegicus (Rat)).